We begin with the raw amino-acid sequence, 656 residues long: Replication protein A 70 kDa DNA-binding subunit A (656 aa).

A DNA-binding region (OB) is located at residues 225–307 (AIKARVTAKG…NHLNNEWEIL (83 aa)). The segment at 516-542 (CPNMIGDRQCNKKVTKSTNGNWTCDKC) adopts a C4-type zinc-finger fold.

The protein belongs to the replication factor A protein 1 family. Heterotrimer of RPA1, RPA2 and RPA3 (canonical replication protein A complex). Interacts with RPA2B. In terms of tissue distribution, expressed in root tips, roots, shoot apical meristem (SAM), young leaves, flag leaves and ears, and at lower levels in mature leaves.

The protein localises to the nucleus. In terms of biological role, component of the replication protein A complex (RPA) required for DNA recombination, repair and replication. The activity of RPA is mediated by single-stranded DNA binding and protein interactions. Plays an essential role in meiotic and somatic DNA repair, but is dispensable for DNA replication and homologous recombination. Is essential for normal progression through meiosis in pollen mother cells. Is involved in repair of double-strand DNA breaks (DSBs) induced by genotoxic stresses. The chain is Replication protein A 70 kDa DNA-binding subunit A (RPA1A) from Oryza sativa subsp. japonica (Rice).